The chain runs to 161 residues: 3-hydroxyacyl-[acyl-carrier-protein] dehydratase FabZ (161 aa).

Residue His55 is part of the active site.

Belongs to the thioester dehydratase family. FabZ subfamily.

The protein resides in the cytoplasm. The enzyme catalyses a (3R)-hydroxyacyl-[ACP] = a (2E)-enoyl-[ACP] + H2O. In terms of biological role, involved in unsaturated fatty acids biosynthesis. Catalyzes the dehydration of short chain beta-hydroxyacyl-ACPs and long chain saturated and unsaturated beta-hydroxyacyl-ACPs. This Jannaschia sp. (strain CCS1) protein is 3-hydroxyacyl-[acyl-carrier-protein] dehydratase FabZ.